A 98-amino-acid chain; its full sequence is DNA-binding protein Fis (98 aa).

Residues 74-93 (QTRAALMMGINRGTLRKKLK) constitute a DNA-binding region (H-T-H motif).

The protein belongs to the transcriptional regulatory Fis family. In terms of assembly, homodimer.

Its function is as follows. Activates ribosomal RNA transcription. Plays a direct role in upstream activation of rRNA promoters. The polypeptide is DNA-binding protein Fis (Yersinia enterocolitica serotype O:8 / biotype 1B (strain NCTC 13174 / 8081)).